Reading from the N-terminus, the 97-residue chain is Small ribosomal subunit protein bS6 (97 aa).

The protein belongs to the bacterial ribosomal protein bS6 family.

In terms of biological role, binds together with bS18 to 16S ribosomal RNA. The protein is Small ribosomal subunit protein bS6 of Bifidobacterium longum (strain NCC 2705).